The chain runs to 258 residues: Imidazole glycerol phosphate synthase subunit HisF (258 aa).

Residues D11 and D130 contribute to the active site.

The protein belongs to the HisA/HisF family. As to quaternary structure, heterodimer of HisH and HisF.

Its subcellular location is the cytoplasm. It carries out the reaction 5-[(5-phospho-1-deoxy-D-ribulos-1-ylimino)methylamino]-1-(5-phospho-beta-D-ribosyl)imidazole-4-carboxamide + L-glutamine = D-erythro-1-(imidazol-4-yl)glycerol 3-phosphate + 5-amino-1-(5-phospho-beta-D-ribosyl)imidazole-4-carboxamide + L-glutamate + H(+). It participates in amino-acid biosynthesis; L-histidine biosynthesis; L-histidine from 5-phospho-alpha-D-ribose 1-diphosphate: step 5/9. Its function is as follows. IGPS catalyzes the conversion of PRFAR and glutamine to IGP, AICAR and glutamate. The HisF subunit catalyzes the cyclization activity that produces IGP and AICAR from PRFAR using the ammonia provided by the HisH subunit. The polypeptide is Imidazole glycerol phosphate synthase subunit HisF (Shigella sonnei (strain Ss046)).